The following is a 381-amino-acid chain: Probable G-protein coupled receptor 34 (381 aa).

At 1 to 61 (MRSHTITMTT…LLSTVLTTSY (61 aa)) the chain is on the extracellular side. Residues Asn28, Asn36, and Asn42 are each glycosylated (N-linked (GlcNAc...) asparagine). A helical transmembrane segment spans residues 62–82 (SVIFIVGLVGNIIALYVFLGI). Residues 83-88 (HRKRNS) lie on the Cytoplasmic side of the membrane. Residues 89-109 (IQIYLLNVAIADLLLIFCLPF) traverse the membrane as a helical segment. Residues 110-128 (RIMYHINQNKWTLGVILCK) are Extracellular-facing. Cys127 and Cys204 are disulfide-bonded. Residues 129–149 (VVGTLFYMNMYISIILLGFIS) traverse the membrane as a helical segment. Topologically, residues 150-171 (LDRYIKINRSIQQRKAITTKQS) are cytoplasmic. Residues 172 to 192 (IYVCCIVWMLALGGFLTMIIL) traverse the membrane as a helical segment. The Extracellular segment spans residues 193 to 216 (TLKKGGHNSTMCFHYRDKHNAKGE). A glycan (N-linked (GlcNAc...) asparagine) is linked at Asn200. A helical transmembrane segment spans residues 217-237 (AIFNFILVVMFWLIFLLIILS). Residues 238–269 (YIKIGKNLLRISKRRSKFPNSGKYATTARNSF) lie on the Cytoplasmic side of the membrane. The helical transmembrane segment at 270 to 290 (IVLIIFTICFVPYHAFRFIYI) threads the bilayer. Over 291–310 (SSQLNVSSCYWKEIVHKTNE) the chain is Extracellular. Residue Asn295 is glycosylated (N-linked (GlcNAc...) asparagine). Residues 311-331 (IMLVLSSFNSCLDPVMYFLMS) form a helical membrane-spanning segment. The Cytoplasmic segment spans residues 332-381 (SNIRKIMCQLLFRRFQGEPSRSESTSEFKPGYSLHDTSVAVKIQSSSKST).

It belongs to the G-protein coupled receptor 1 family.

The protein localises to the cell membrane. Its function is as follows. G-protein-coupled receptor of lysophosphatidylserine (LysoPS) that plays different roles in immune response. Acts a damage-sensing receptor that triggers tissue repair upon recognition of dying neutrophils. Mechanistically, apoptotic neutrophils release lysophosphatydilserine that are recognized by type 3 innate lymphoid cells (ILC3s) via GPR34, which activates downstream PI3K-AKT and RAS-ERK signaling pathways leading to STAT3 activation and IL-22 production. Plays an important role in microglial function, controlling morphology and phagocytosis. The sequence is that of Probable G-protein coupled receptor 34 (GPR34) from Gorilla gorilla gorilla (Western lowland gorilla).